A 277-amino-acid polypeptide reads, in one-letter code: Diaminopimelate epimerase (277 aa).

Substrate is bound by residues Asn13, Gln46, and Asn66. The active-site Proton donor is the Cys75. Substrate-binding positions include 76-77, Asn160, Asn193, and 211-212; these read GN and ER. Cys220 (proton acceptor) is an active-site residue. Position 221-222 (221-222) interacts with substrate; the sequence is GT.

This sequence belongs to the diaminopimelate epimerase family. Homodimer.

The protein resides in the cytoplasm. It catalyses the reaction (2S,6S)-2,6-diaminopimelate = meso-2,6-diaminopimelate. It functions in the pathway amino-acid biosynthesis; L-lysine biosynthesis via DAP pathway; DL-2,6-diaminopimelate from LL-2,6-diaminopimelate: step 1/1. Functionally, catalyzes the stereoinversion of LL-2,6-diaminopimelate (L,L-DAP) to meso-diaminopimelate (meso-DAP), a precursor of L-lysine and an essential component of the bacterial peptidoglycan. This chain is Diaminopimelate epimerase, found in Saccharophagus degradans (strain 2-40 / ATCC 43961 / DSM 17024).